The primary structure comprises 686 residues: MAM domain-containing protein 2 (686 aa).

Residues 1-18 (MLLEGVLLVVQALQLASA) form the signal peptide. MAM domains lie at 24-169 (GSCA…YCIE), 168-329 (IECD…HCQN), 340-498 (TSCD…NCRS), and 507-666 (GECT…PCAG). 2 N-linked (GlcNAc...) asparagine glycosylation sites follow: Asn134 and Asn329. Residue Asn524 is glycosylated (N-linked (GlcNAc...) asparagine). The interval 665–686 (AGMEDTTEQSSGYSEDLNEIEY) is disordered.

Post-translationally, O-glycosylated; contains chondroitin sulfate.

It is found in the secreted. It localises to the extracellular space. The protein resides in the extracellular matrix. This is MAM domain-containing protein 2 (Mamdc2) from Mus musculus (Mouse).